Consider the following 329-residue polypeptide: Homeobox protein Nkx-3.2 (329 aa).

Positions Gly-107 to Pro-188 are disordered. Residues Ser-110–Pro-124 show a composition bias toward gly residues. The span at Glu-138–Gly-160 shows a compositional bias: basic and acidic residues. The segment at residues Lys-202 to Gln-261 is a DNA-binding region (homeobox).

This sequence belongs to the NK-3 homeobox family. First expressed in developing facial cartilage in early tailbud embryos, with expression localized to the basihyobranchial, palatoquadrate and possibly Meckel's cartilages. Shortly after, a second area of expression is seen in the musculature of the anterior gut. During late embryogenesis, gut expression extends into hindgut tissues. In adults, expressed at a high level in the kidney, pancreas, spleen and stomach and at a slightly lower level in the intestine, skeletal muscle and tongue. Adult heart, liver and lung show little or no expression.

Its subcellular location is the nucleus. This chain is Homeobox protein Nkx-3.2 (nkx3-2), found in Xenopus laevis (African clawed frog).